A 62-amino-acid polypeptide reads, in one-letter code: MVTILQLLVSILILLSFALVVGVPVILVSPGEWERSKNLVYASAGLWFGLVIVTAAFNSFVI.

2 consecutive transmembrane segments (helical) span residues 8-28 (LVSI…VILV) and 41-61 (YASA…NSFV).

It belongs to the PsbZ family. As to quaternary structure, PSII is composed of 1 copy each of membrane proteins PsbA, PsbB, PsbC, PsbD, PsbE, PsbF, PsbH, PsbI, PsbJ, PsbK, PsbL, PsbM, PsbT, PsbX, PsbY, PsbZ, Psb30/Ycf12, at least 3 peripheral proteins of the oxygen-evolving complex and a large number of cofactors. It forms dimeric complexes.

The protein resides in the plastid. The protein localises to the chloroplast thylakoid membrane. In terms of biological role, may control the interaction of photosystem II (PSII) cores with the light-harvesting antenna, regulates electron flow through the 2 photosystem reaction centers. PSII is a light-driven water plastoquinone oxidoreductase, using light energy to abstract electrons from H(2)O, generating a proton gradient subsequently used for ATP formation. This chain is Photosystem II reaction center protein Z, found in Guillardia theta (Cryptophyte).